A 194-amino-acid chain; its full sequence is HTH-type transcriptional regulator BetI (194 aa).

The HTH tetR-type domain maps to 8-68; sequence EIRRAQLIDA…ATMRHVLRDL (61 aa). Residues 31 to 50 constitute a DNA-binding region (H-T-H motif); the sequence is TLASVAQRANISTGIVSHYF.

The protein operates within amine and polyamine biosynthesis; betaine biosynthesis via choline pathway [regulation]. Repressor involved in the biosynthesis of the osmoprotectant glycine betaine. It represses transcription of the choline transporter BetT and the genes of BetAB involved in the synthesis of glycine betaine. The sequence is that of HTH-type transcriptional regulator BetI from Burkholderia lata (strain ATCC 17760 / DSM 23089 / LMG 22485 / NCIMB 9086 / R18194 / 383).